Here is a 428-residue protein sequence, read N- to C-terminus: Glutamate-1-semialdehyde 2,1-aminomutase (428 aa).

Position 265 is an N6-(pyridoxal phosphate)lysine (lysine 265).

It belongs to the class-III pyridoxal-phosphate-dependent aminotransferase family. HemL subfamily. Homodimer. The cofactor is pyridoxal 5'-phosphate.

The protein localises to the cytoplasm. It carries out the reaction (S)-4-amino-5-oxopentanoate = 5-aminolevulinate. Its pathway is porphyrin-containing compound metabolism; protoporphyrin-IX biosynthesis; 5-aminolevulinate from L-glutamyl-tRNA(Glu): step 2/2. This is Glutamate-1-semialdehyde 2,1-aminomutase from Shewanella sediminis (strain HAW-EB3).